Here is a 508-residue protein sequence, read N- to C-terminus: 2,3-bisphosphoglycerate-independent phosphoglycerate mutase (508 aa).

Mn(2+)-binding residues include aspartate 13 and serine 63. The Phosphoserine intermediate role is filled by serine 63. Residues histidine 122, 152–153 (RD), arginine 184, arginine 190, 256–259 (RADR), and lysine 330 each bind substrate. Mn(2+) is bound by residues aspartate 397, histidine 401, aspartate 438, histidine 439, and histidine 457.

This sequence belongs to the BPG-independent phosphoglycerate mutase family. As to quaternary structure, monomer. Mn(2+) is required as a cofactor.

It catalyses the reaction (2R)-2-phosphoglycerate = (2R)-3-phosphoglycerate. Its pathway is carbohydrate degradation; glycolysis; pyruvate from D-glyceraldehyde 3-phosphate: step 3/5. Its function is as follows. Catalyzes the interconversion of 2-phosphoglycerate and 3-phosphoglycerate. The protein is 2,3-bisphosphoglycerate-independent phosphoglycerate mutase of Laribacter hongkongensis (strain HLHK9).